The primary structure comprises 257 residues: Peptide methionine sulfoxide reductase (257 aa).

The tract at residues 61–88 is disordered; the sequence is LGFGSRPQPDPAASSAIAQGPDDDVPSP. Ser-244 bears the Phosphoserine mark.

It belongs to the MsrA Met sulfoxide reductase family.

It carries out the reaction L-methionyl-[protein] + [thioredoxin]-disulfide + H2O = L-methionyl-(S)-S-oxide-[protein] + [thioredoxin]-dithiol. It catalyses the reaction [thioredoxin]-disulfide + L-methionine + H2O = L-methionine (S)-S-oxide + [thioredoxin]-dithiol. Functionally, has an important function as a repair enzyme for proteins that have been inactivated by oxidation. Catalyzes the reversible oxidation-reduction of methionine sulfoxide in proteins to methionine. This is Peptide methionine sulfoxide reductase (PMSR) from Brassica napus (Rape).